A 355-amino-acid polypeptide reads, in one-letter code: 3-dehydroquinate synthase (355 aa).

Residues 71–76 (EGEASK), 105–109 (GVVGD), 129–130 (TS), K142, K151, and 169–172 (TLKT) each bind NAD(+). The Zn(2+) site is built by E184, H246, and H263.

This sequence belongs to the sugar phosphate cyclases superfamily. Dehydroquinate synthase family. Co(2+) serves as cofactor. Requires Zn(2+) as cofactor. It depends on NAD(+) as a cofactor.

It localises to the cytoplasm. The catalysed reaction is 7-phospho-2-dehydro-3-deoxy-D-arabino-heptonate = 3-dehydroquinate + phosphate. It functions in the pathway metabolic intermediate biosynthesis; chorismate biosynthesis; chorismate from D-erythrose 4-phosphate and phosphoenolpyruvate: step 2/7. In terms of biological role, catalyzes the conversion of 3-deoxy-D-arabino-heptulosonate 7-phosphate (DAHP) to dehydroquinate (DHQ). This Streptococcus suis (strain 98HAH33) protein is 3-dehydroquinate synthase.